The following is a 675-amino-acid chain: Cysteine-rich receptor-like protein kinase 25 (675 aa).

A signal peptide spans 1-25; the sequence is MSSCFKSSVSLFSVFLFMILKTVTS. Residues 26 to 281 lie on the Extracellular side of the membrane; sequence DPTYLYHICP…IPSEKGKGKN (256 aa). Gnk2-homologous domains are found at residues 28–134 and 140–247; these read TYLY…NQSI and IRPG…LYPF. Residues N36, N43, N77, N106, N131, N151, N161, N188, N249, and N281 are each glycosylated (N-linked (GlcNAc...) asparagine). The helical transmembrane segment at 282–302 threads the bilayer; that stretch reads LTVIVTAIAVPVSVCVLLLGA. Residues 303 to 675 lie on the Cytoplasmic side of the membrane; the sequence is MCWLLARRRN…DSSITIVYPR (373 aa). Positions 347–622 constitute a Protein kinase domain; sequence FSESNKLGHG…DILVMMNSFT (276 aa). Residues 353–361 and K375 contribute to the ATP site; that span reads LGHGGFGEV. A Phosphotyrosine modification is found at Y420. D472 serves as the catalytic Proton acceptor. At S476 the chain carries Phosphoserine. T512 bears the Phosphothreonine mark. Y520 carries the post-translational modification Phosphotyrosine. The segment at 638–661 is disordered; it reads MKDSRDPRSGGSASDHSATSKSLP. Over residues 648 to 661 the composition is skewed to polar residues; that stretch reads GSASDHSATSKSLP.

It belongs to the protein kinase superfamily. Ser/Thr protein kinase family. CRK subfamily.

Its subcellular location is the membrane. The catalysed reaction is L-seryl-[protein] + ATP = O-phospho-L-seryl-[protein] + ADP + H(+). It catalyses the reaction L-threonyl-[protein] + ATP = O-phospho-L-threonyl-[protein] + ADP + H(+). The protein is Cysteine-rich receptor-like protein kinase 25 (CRK25) of Arabidopsis thaliana (Mouse-ear cress).